Reading from the N-terminus, the 155-residue chain is MRLRLIAVGSRMPRWVEEGWQEYVKRLPAELSLELVEIPLNTRGKNADVARLIRQEGEAMLARVQPGERVVTLEVEGRPWSTEQLARELDRWRLDARTVNLMVGGPEGLAPEVCARSEQRWSLSPLTLPHPLVRILVGEQIYRAWTVLSGHPYHK.

Residues Leu73, Gly104, and 123–128 (LSPLTL) contribute to the S-adenosyl-L-methionine site.

It belongs to the RNA methyltransferase RlmH family. In terms of assembly, homodimer.

It is found in the cytoplasm. It carries out the reaction pseudouridine(1915) in 23S rRNA + S-adenosyl-L-methionine = N(3)-methylpseudouridine(1915) in 23S rRNA + S-adenosyl-L-homocysteine + H(+). In terms of biological role, specifically methylates the pseudouridine at position 1915 (m3Psi1915) in 23S rRNA. The sequence is that of Ribosomal RNA large subunit methyltransferase H from Pseudomonas aeruginosa (strain LESB58).